A 436-amino-acid polypeptide reads, in one-letter code: MSDDQSLSEVEMSPVGSEDPSLTPDPLPPHAHSSPDDDEETKVKKEQDSEDERFPVCIREAVSQVLSGYDWTLVPMPVRVNGGSKSKPHVKRPMNAFMVWAQAARRKLADQYPHLHNAELSKTLGKLWRLLNENDKRPFIEEAERLRMQHKKDHPDYKYQPRRRKNGKPNPGEGDGSSEAEGGAASIQAHYKNSHLDHRHGSPMSDGNSEHSAGQSHGPPTPPTTPKTELQAGKSDGKRDGSRSLGEGGKPHIDFGNVDIGEISHDVMANMETFDVNEFDQYLPPNGHAGHPSHIGGYTSSYGLSGALAAGPSAWALAKQHPQTDSKAQVKTESSSTSHYTEQPSTSQLTYTSLGLPHYGSAFPSISRPQFDYADHQPSSSYYSHSSQASSLYSAFSYMGPPQRPLYTAISDSPSVAQSHSPTHWEQPVYTTLSRP.

5 disordered regions span residues 1–55 (MSDD…ERFP), 145–183 (RLRM…AEGG), 195–257 (HLDH…DFGN), 322–346 (PQTD…QPST), and 413–436 (SPSV…LSRP). Lysine 44 participates in a covalent cross-link: Glycyl lysine isopeptide (Lys-Gly) (interchain with G-Cter in SUMO). Residues 48-88 (DSEDERFPVCIREAVSQVLSGYDWTLVPMPVRVNGGSKSKP) are dimerization (DIM). Positions 90-158 (VKRPMNAFMV…QHKKDHPDYK (69 aa)) form a DNA-binding region, HMG box. The span at 145-159 (RLRMQHKKDHPDYKY) shows a compositional bias: basic and acidic residues. Composition is skewed to polar residues over residues 205–215 (SDGNSEHSAGQ) and 331–346 (KTES…QPST). The tract at residues 209–295 (SEHSAGQSHG…NGHAGHPSHI (87 aa)) is transactivation domain (TAM). The interval 327–436 (KAQVKTESSS…QPVYTTLSRP (110 aa)) is transactivation domain (TAC). Lysine 331 participates in a covalent cross-link: Glycyl lysine isopeptide (Lys-Gly) (interchain with G-Cter in SUMO).

As to quaternary structure, interacts with the sumoylation factors ube2i/ubc9 and sumo1. Sumoylated.

The protein resides in the cytoplasm. Its subcellular location is the nucleus. Its function is as follows. Acts early in neural crest formation, functioning redundantly with the other group E Sox factors sox8 and sox9 to induce neural crest progenitors. Acts downstream of wnt-signaling at the neural plate border. Involved in the specification of neural crest progenitors fated to form the pigment cell lineage. In Xenopus tropicalis (Western clawed frog), this protein is Transcription factor Sox-10.